The sequence spans 205 residues: Guanylate kinase (205 aa).

A Guanylate kinase-like domain is found at 6–185 (GLLIVLSGPS…ACERIKAIVV (180 aa)). An ATP-binding site is contributed by 13 to 20 (GPSGVGKG).

Belongs to the guanylate kinase family.

Its subcellular location is the cytoplasm. It catalyses the reaction GMP + ATP = GDP + ADP. Its function is as follows. Essential for recycling GMP and indirectly, cGMP. In Bacillus anthracis, this protein is Guanylate kinase.